The primary structure comprises 83 residues: RNA-binding protein Hfq (83 aa).

Positions 9-69 (DQLLNTARKE…ISTIIPAKPI (61 aa)) constitute a Sm domain.

This sequence belongs to the Hfq family. As to quaternary structure, homohexamer.

In terms of biological role, RNA chaperone that binds small regulatory RNA (sRNAs) and mRNAs to facilitate mRNA translational regulation in response to envelope stress, environmental stress and changes in metabolite concentrations. Also binds with high specificity to tRNAs. This Leptospira biflexa serovar Patoc (strain Patoc 1 / Ames) protein is RNA-binding protein Hfq.